Reading from the N-terminus, the 339-residue chain is MKEQLNSIRVQAEQELSNVGTIAELENIRVKYLGKKGELTAVLRGMGSLSPEERPVIGQLANEIRAYIESRIEEARNELIKKERSQKLEREVIDVTMPGKRKMLGKKHPLSIVIDEIKDVFIGMGYEIAEGPEVELDYYNFEALNIPRNHPARDVQDTFYINNNILLRTQTSPVQIRVMENKKPPIKIICPGRVYRSDAVDATHSPIFHQVEGLVVDKGVTMGDLVGTLRVFAKSLFGEKTEIRLRPHHFPFTEPSAEVDVSCWACGGTGCRICKNEGWIEILGAGMVHPKVLEVCGIDPEVYSGFAFGLGVERTAMGRFNIDDMRLLYENDIRFLKQF.

E254 serves as a coordination point for Mg(2+).

It belongs to the class-II aminoacyl-tRNA synthetase family. Phe-tRNA synthetase alpha subunit type 1 subfamily. Tetramer of two alpha and two beta subunits. Requires Mg(2+) as cofactor.

It localises to the cytoplasm. The catalysed reaction is tRNA(Phe) + L-phenylalanine + ATP = L-phenylalanyl-tRNA(Phe) + AMP + diphosphate + H(+). The polypeptide is Phenylalanine--tRNA ligase alpha subunit (Acetivibrio thermocellus (strain ATCC 27405 / DSM 1237 / JCM 9322 / NBRC 103400 / NCIMB 10682 / NRRL B-4536 / VPI 7372) (Clostridium thermocellum)).